We begin with the raw amino-acid sequence, 539 residues long: Hydroxylamine reductase (539 aa).

Residues C3, C6, C14, and C20 each coordinate [4Fe-4S] cluster. Hybrid [4Fe-2O-2S] cluster is bound by residues H232, E256, C300, C392, C420, C445, E480, and K482. C392 is subject to Cysteine persulfide.

It belongs to the HCP family. Requires [4Fe-4S] cluster as cofactor. Hybrid [4Fe-2O-2S] cluster is required as a cofactor.

It localises to the cytoplasm. The catalysed reaction is A + NH4(+) + H2O = hydroxylamine + AH2 + H(+). Catalyzes the reduction of hydroxylamine to form NH(3) and H(2)O. The polypeptide is Hydroxylamine reductase (Chlorobaculum tepidum (strain ATCC 49652 / DSM 12025 / NBRC 103806 / TLS) (Chlorobium tepidum)).